The chain runs to 413 residues: MTDNRVENSSGRAARKLRLALMGPAFIAAIGYIDPGNFATNIQAGASFGYQLLWVVVWANLMAMLIQILSAKLGIATGKNLAEQIRDHYPRPVVWFYWVQAEIIAMATDLAEFIGAAIGFKLILGVSLLQGAVLTGIATFLILMLQRRGQKPLEKVIGGLLLFVAAAYIVELFFSQPDMAQLGKGMVIPALPNPEAVFLAAGVLGATIMPHVIYLHSSLTQHLHGGTRQQRYSATKWDVAIAMTIAGFVNLAMMATAAAAFHFSGHTGIADLDQAYLTLEPLLSHAAATVFGLSLVAAGLSSTVVGTLAGQVVMQGFVRFHIPLWVRRTITMLPSFIVILMGLDPTRILVMSQVLLSFGIALALVPLLIFTSNATLMGELVNTRRVKQIGWIIVVLVVALNIWLLVGTVMGLS.

The Cytoplasmic segment spans residues 1–19; it reads MTDNRVENSSGRAARKLRL. The chain crosses the membrane as a helical span at residues 20–39; the sequence is ALMGPAFIAAIGYIDPGNFA. Residues 40-51 lie on the Periplasmic side of the membrane; sequence TNIQAGASFGYQ. The chain crosses the membrane as a helical span at residues 52-71; it reads LLWVVVWANLMAMLIQILSA. Residues 72-95 lie on the Cytoplasmic side of the membrane; that stretch reads KLGIATGKNLAEQIRDHYPRPVVW. The chain crosses the membrane as a helical span at residues 96–118; sequence FYWVQAEIIAMATDLAEFIGAAI. The Periplasmic portion of the chain corresponds to 119–125; the sequence is GFKLILG. The helical transmembrane segment at 126–145 threads the bilayer; that stretch reads VSLLQGAVLTGIATFLILML. Residues 146-155 are Cytoplasmic-facing; the sequence is QRRGQKPLEK. The helical transmembrane segment at 156-175 threads the bilayer; the sequence is VIGGLLLFVAAAYIVELFFS. At 176–196 the chain is on the periplasmic side; the sequence is QPDMAQLGKGMVIPALPNPEA. A helical transmembrane segment spans residues 197 to 220; sequence VFLAAGVLGATIMPHVIYLHSSLT. Residues 221-238 lie on the Cytoplasmic side of the membrane; the sequence is QHLHGGTRQQRYSATKWD. The helical transmembrane segment at 239–258 threads the bilayer; that stretch reads VAIAMTIAGFVNLAMMATAA. Topologically, residues 259–276 are periplasmic; that stretch reads AAFHFSGHTGIADLDQAY. The helical transmembrane segment at 277-297 threads the bilayer; the sequence is LTLEPLLSHAAATVFGLSLVA. At 298-327 the chain is on the cytoplasmic side; the sequence is AGLSSTVVGTLAGQVVMQGFVRFHIPLWVR. Residues 328–344 traverse the membrane as a helical segment; that stretch reads RTITMLPSFIVILMGLD. Residues 345 to 350 lie on the Periplasmic side of the membrane; the sequence is PTRILV. Residues 351-370 form a helical membrane-spanning segment; sequence MSQVLLSFGIALALVPLLIF. Residues 371 to 387 are Cytoplasmic-facing; the sequence is TSNATLMGELVNTRRVK. A helical transmembrane segment spans residues 388 to 406; that stretch reads QIGWIIVVLVVALNIWLLV. Over 407-413 the chain is Periplasmic; it reads GTVMGLS.

This sequence belongs to the NRAMP family.

It is found in the cell inner membrane. Functionally, h(+)-stimulated, divalent metal cation uptake system. This Salmonella schwarzengrund (strain CVM19633) protein is Divalent metal cation transporter MntH.